The following is a 149-amino-acid chain: 3-dehydroquinate dehydratase (149 aa).

The Proton acceptor role is filled by tyrosine 26. Substrate is bound by residues asparagine 77, histidine 83, and aspartate 90. Histidine 103 functions as the Proton donor in the catalytic mechanism. Residues 104-105 and arginine 114 each bind substrate; that span reads LS.

It belongs to the type-II 3-dehydroquinase family. As to quaternary structure, homododecamer.

The catalysed reaction is 3-dehydroquinate = 3-dehydroshikimate + H2O. It functions in the pathway metabolic intermediate biosynthesis; chorismate biosynthesis; chorismate from D-erythrose 4-phosphate and phosphoenolpyruvate: step 3/7. Its function is as follows. Catalyzes a trans-dehydration via an enolate intermediate. The chain is 3-dehydroquinate dehydratase from Haemophilus influenzae (strain PittGG).